A 448-amino-acid polypeptide reads, in one-letter code: Dual specificity mitogen-activated protein kinase kinase 5 (448 aa).

An interaction with MAPK7 region spans residues 18 to 25 (VIRIKIPN). In terms of domain architecture, PB1 spans 18–109 (VIRIKIPNSG…EPLQIFPRAC (92 aa)). Residues 64-68 (DEDGD) are interaction with MAP3K2/MAP3K3. The segment at 116–144 (NIHGLKVNTRAGPSQHTSPVVSDSLPSNS) is disordered. The tract at residues 117-131 (IHGLKVNTRAGPSQH) is interaction with MAPK7. Polar residues predominate over residues 126–144 (AGPSQHTSPVVSDSLPSNS). Residues 166 to 419 (IRYRDTLGHG…PEELMGHPFI (254 aa)) enclose the Protein kinase domain. Residues 172–180 (LGHGNGGTV) and Lys195 each bind ATP. The Proton acceptor role is filled by Asp283. Ser311 carries the phosphoserine modification. Phosphothreonine is present on Thr315.

It belongs to the protein kinase superfamily. STE Ser/Thr protein kinase family. MAP kinase kinase subfamily. As to quaternary structure, interacts with PARD6A, MAP3K3 and MAPK7. Forms a complex with SQSTM1 and PRKCZ or PRKCI. Mg(2+) serves as cofactor. Activated by phosphorylation on Ser/Thr by MAP kinase kinase kinases. As to expression, expressed in the liver and brain (at protein level). In terms of tissue distribution, expressed in the liver, muscle, testes, lung, kidney, spleen, heart and brain (at protein level).

The protein resides in the cytoplasm. Its subcellular location is the cytosol. It is found in the membrane. The catalysed reaction is L-seryl-[protein] + ATP = O-phospho-L-seryl-[protein] + ADP + H(+). It catalyses the reaction L-threonyl-[protein] + ATP = O-phospho-L-threonyl-[protein] + ADP + H(+). The enzyme catalyses L-tyrosyl-[protein] + ATP = O-phospho-L-tyrosyl-[protein] + ADP + H(+). Its function is as follows. Acts as a scaffold for the formation of a ternary MAP3K2/MAP3K3-MAP3K5-MAPK7 signaling complex. Activation of this pathway appears to play a critical role in protecting cells from stress-induced apoptosis, neuronal survival and cardiac development and angiogenesis. As part of the MAPK/ERK signaling pathway, acts as a negative regulator of apoptosis in cardiomyocytes via promotion of STUB1/CHIP-mediated ubiquitination and degradation of ICER-type isoforms of CREM. The chain is Dual specificity mitogen-activated protein kinase kinase 5 (Map2k5) from Rattus norvegicus (Rat).